The following is a 208-amino-acid chain: FMN-dependent NADH:quinone oxidoreductase (208 aa).

Residues serine 9, 15–17, 96–99, and 140–143 contribute to the FMN site; these read SVS, MYNF, and TRGG.

The protein belongs to the azoreductase type 1 family. Homodimer. Requires FMN as cofactor.

The catalysed reaction is 2 a quinone + NADH + H(+) = 2 a 1,4-benzosemiquinone + NAD(+). The enzyme catalyses N,N-dimethyl-1,4-phenylenediamine + anthranilate + 2 NAD(+) = 2-(4-dimethylaminophenyl)diazenylbenzoate + 2 NADH + 2 H(+). Functionally, quinone reductase that provides resistance to thiol-specific stress caused by electrophilic quinones. In terms of biological role, also exhibits azoreductase activity. Catalyzes the reductive cleavage of the azo bond in aromatic azo compounds to the corresponding amines. This is FMN-dependent NADH:quinone oxidoreductase from Azospirillum brasilense.